Consider the following 224-residue polypeptide: 4'-phosphopantetheinyl transferase ffp (224 aa).

Mg(2+) is bound by residues D107, E109, and E151. Residues 158-189 (GKGLSLPLDSFSVRLHEDGRVSVELPEHHTPC) are peptidyl carrier protein binding.

It belongs to the P-Pant transferase superfamily. Gsp/Sfp/HetI/AcpT family. Requires Mg(2+) as cofactor.

The enzyme catalyses apo-[peptidyl-carrier protein] + CoA = holo-[peptidyl-carrier protein] + adenosine 3',5'-bisphosphate + H(+). Its function is as follows. May activate the peptidyl carrier protein (PCP) domains of fengycin synthase by transferring the 4'-phosphopantetheinyl moiety of coenzyme A (CoA) to a serine residue. The chain is 4'-phosphopantetheinyl transferase ffp (ffp) from Bacillus subtilis.